Reading from the N-terminus, the 493-residue chain is Ketol-acid reductoisomerase (NADP(+)) (493 aa).

Positions 14–208 (LDQLGRCRFM…GGDRAGVLES (195 aa)) constitute a KARI N-terminal Rossmann domain. Residues 45 to 48 (CGAQ), R68, R76, S78, and 108 to 110 (DKQ) each bind NADP(+). H132 is a catalytic residue. G158 is a binding site for NADP(+). 2 consecutive KARI C-terminal knotted domains span residues 209–345 (SFVA…SPKA) and 346–486 (DGIK…MTDM). Positions 217, 221, 390, and 394 each coordinate Mg(2+). A substrate-binding site is contributed by S415.

Belongs to the ketol-acid reductoisomerase family. Requires Mg(2+) as cofactor.

It catalyses the reaction (2R)-2,3-dihydroxy-3-methylbutanoate + NADP(+) = (2S)-2-acetolactate + NADPH + H(+). It carries out the reaction (2R,3R)-2,3-dihydroxy-3-methylpentanoate + NADP(+) = (S)-2-ethyl-2-hydroxy-3-oxobutanoate + NADPH + H(+). Its pathway is amino-acid biosynthesis; L-isoleucine biosynthesis; L-isoleucine from 2-oxobutanoate: step 2/4. It participates in amino-acid biosynthesis; L-valine biosynthesis; L-valine from pyruvate: step 2/4. Involved in the biosynthesis of branched-chain amino acids (BCAA). Catalyzes an alkyl-migration followed by a ketol-acid reduction of (S)-2-acetolactate (S2AL) to yield (R)-2,3-dihydroxy-isovalerate. In the isomerase reaction, S2AL is rearranged via a Mg-dependent methyl migration to produce 3-hydroxy-3-methyl-2-ketobutyrate (HMKB). In the reductase reaction, this 2-ketoacid undergoes a metal-dependent reduction by NADPH to yield (R)-2,3-dihydroxy-isovalerate. The polypeptide is Ketol-acid reductoisomerase (NADP(+)) (Actinobacillus pleuropneumoniae serotype 3 (strain JL03)).